The following is a 199-amino-acid chain: SCO2-like protein RBE_0029 (199 aa).

This sequence belongs to the SCO1/2 family.

The chain is SCO2-like protein RBE_0029 from Rickettsia bellii (strain RML369-C).